The primary structure comprises 456 residues: tRNA-2-methylthio-N(6)-dimethylallyladenosine synthase (456 aa).

An MTTase N-terminal domain is found at 1-116; sequence MTYFFETYGC…FESIFQEIEQ (116 aa). The [4Fe-4S] cluster site is built by Cys10, Cys46, Cys79, Cys162, Cys166, and Cys169. The region spanning 148–384 is the Radical SAM core domain; the sequence is SEGSFQSFIP…IALQMSTTLK (237 aa). The TRAM domain occupies 387 to 452; sequence RARVGKTLPV…GRTLRAHLVQ (66 aa).

This sequence belongs to the methylthiotransferase family. MiaB subfamily. As to quaternary structure, monomer. The cofactor is [4Fe-4S] cluster.

The protein localises to the cytoplasm. It catalyses the reaction N(6)-dimethylallyladenosine(37) in tRNA + (sulfur carrier)-SH + AH2 + 2 S-adenosyl-L-methionine = 2-methylsulfanyl-N(6)-dimethylallyladenosine(37) in tRNA + (sulfur carrier)-H + 5'-deoxyadenosine + L-methionine + A + S-adenosyl-L-homocysteine + 2 H(+). Catalyzes the methylthiolation of N6-(dimethylallyl)adenosine (i(6)A), leading to the formation of 2-methylthio-N6-(dimethylallyl)adenosine (ms(2)i(6)A) at position 37 in tRNAs that read codons beginning with uridine. The chain is tRNA-2-methylthio-N(6)-dimethylallyladenosine synthase from Treponema pallidum (strain Nichols).